A 392-amino-acid chain; its full sequence is Ribonuclease D (392 aa).

The 167-residue stretch at 12 to 178 folds into the 3'-5' exonuclease domain; sequence LIETTEALAA…PVYEGLRARL (167 aa). The 82-residue stretch at 217–298 folds into the HRDC domain; that stretch reads NRRQLALVKA…ASTKAIPDAE (82 aa).

This sequence belongs to the RNase D family. Requires a divalent metal cation as cofactor.

It localises to the cytoplasm. The enzyme catalyses Exonucleolytic cleavage that removes extra residues from the 3'-terminus of tRNA to produce 5'-mononucleotides.. Its function is as follows. Exonuclease involved in the 3' processing of various precursor tRNAs. Initiates hydrolysis at the 3'-terminus of an RNA molecule and releases 5'-mononucleotides. This chain is Ribonuclease D, found in Acidiphilium cryptum (strain JF-5).